Consider the following 344-residue polypeptide: L-rhamnose-proton symporter (344 aa).

The next 10 membrane-spanning stretches (helical) occupy residues 4-24 (AITM…CFYA), 38-58 (WSVG…ALLL), 68-88 (FSLS…IGNI), 101-121 (MGIG…TPII), 137-157 (TLLG…AGQL), 175-195 (LVLA…MNAA), 214-234 (LPSY…FCFI), 259-279 (VLLS…YAWG), 290-310 (ISWM…GLVL), and 323-343 (VLSL…IGMA).

This sequence belongs to the L-rhamnose transporter (TC 2.A.7.6) family.

The protein localises to the cell inner membrane. It carries out the reaction L-rhamnopyranose(in) + H(+)(in) = L-rhamnopyranose(out) + H(+)(out). Its function is as follows. Uptake of L-rhamnose across the cytoplasmic membrane with the concomitant transport of protons into the cell (symport system). The polypeptide is L-rhamnose-proton symporter (Escherichia coli O127:H6 (strain E2348/69 / EPEC)).